A 284-amino-acid chain; its full sequence is tRNA uridine(34) hydroxylase (284 aa).

The Rhodanese domain maps to 132-226 (AGRPVVMLDT…YFEEVGGAHY (95 aa)). Cys-186 (cysteine persulfide intermediate) is an active-site residue.

Belongs to the TrhO family.

It catalyses the reaction uridine(34) in tRNA + AH2 + O2 = 5-hydroxyuridine(34) in tRNA + A + H2O. Its function is as follows. Catalyzes oxygen-dependent 5-hydroxyuridine (ho5U) modification at position 34 in tRNAs. The chain is tRNA uridine(34) hydroxylase from Burkholderia ambifaria (strain MC40-6).